Reading from the N-terminus, the 352-residue chain is DNA polymerase IV (352 aa).

The UmuC domain maps to 4-185 (IIHVDMDCFY…LPLEKIPGVG (182 aa)). Mg(2+) contacts are provided by D8 and D103. The active site involves E104.

Belongs to the DNA polymerase type-Y family. In terms of assembly, monomer. It depends on Mg(2+) as a cofactor.

It localises to the cytoplasm. It catalyses the reaction DNA(n) + a 2'-deoxyribonucleoside 5'-triphosphate = DNA(n+1) + diphosphate. In terms of biological role, poorly processive, error-prone DNA polymerase involved in untargeted mutagenesis. Copies undamaged DNA at stalled replication forks, which arise in vivo from mismatched or misaligned primer ends. These misaligned primers can be extended by PolIV. Exhibits no 3'-5' exonuclease (proofreading) activity. May be involved in translesional synthesis, in conjunction with the beta clamp from PolIII. This is DNA polymerase IV from Pectobacterium atrosepticum (strain SCRI 1043 / ATCC BAA-672) (Erwinia carotovora subsp. atroseptica).